The following is a 323-amino-acid chain: Acetyl esterase (323 aa).

Residues 91–93 (HGG) carry the Involved in the stabilization of the negatively charged intermediate by the formation of the oxyanion hole motif. Residues S165, D262, and H292 contribute to the active site.

The protein belongs to the 'GDXG' lipolytic enzyme family. Homodimer. Interacts with MalT and MelA.

The protein localises to the cytoplasm. In terms of biological role, displays esterase activity towards short chain fatty esters (acyl chain length of up to 8 carbons). Able to hydrolyze triacetylglycerol (triacetin) and tributyrylglycerol (tributyrin), but not trioleylglycerol (triolein) or cholesterol oleate. Negatively regulates MalT activity by antagonizing maltotriose binding. Inhibits MelA galactosidase activity. This chain is Acetyl esterase, found in Salmonella typhi.